We begin with the raw amino-acid sequence, 410 residues long: Demethyl-4-deoxygadusol synthase (410 aa).

Residues 56–58, 87–90, 119–123, 143–144, Lys-156, Lys-165, and 183–186 each bind NAD(+); these read DAN, EPDK, GLITD, TT, and LLRT. Positions 198, 271, and 287 each coordinate Zn(2+).

This sequence belongs to the sugar phosphate cyclases superfamily. DDGS family. Homodimer. Requires NAD(+) as cofactor. It depends on Co(2+) as a cofactor. Zn(2+) serves as cofactor.

The catalysed reaction is D-sedoheptulose 7-phosphate = (R)-demethyl-4-deoxygadusol + phosphate + H2O + H(+). Its function is as follows. Catalyzes the conversion of sedoheptulose 7-phosphate to demethyl-4-deoxygadusol (DDG). Involved in the synthesis of the mycosporine-like amino acid shinorine, a natural sunscreen compound that protects the cell against UV radiation. The sequence is that of Demethyl-4-deoxygadusol synthase from Trichormus variabilis (strain ATCC 29413 / PCC 7937) (Anabaena variabilis).